The primary structure comprises 455 residues: Phosphoglucosamine mutase (455 aa).

Ser-106 acts as the Phosphoserine intermediate in catalysis. Mg(2+)-binding residues include Ser-106, Asp-245, Asp-247, and Asp-249. Ser-106 is modified (phosphoserine).

The protein belongs to the phosphohexose mutase family. The cofactor is Mg(2+). Post-translationally, activated by phosphorylation.

It catalyses the reaction alpha-D-glucosamine 1-phosphate = D-glucosamine 6-phosphate. Catalyzes the conversion of glucosamine-6-phosphate to glucosamine-1-phosphate. The protein is Phosphoglucosamine mutase of Acaryochloris marina (strain MBIC 11017).